We begin with the raw amino-acid sequence, 682 residues long: tRNA(Met) cytidine acetyltransferase TmcA (682 aa).

Residues Gln-176, 198 to 207 (GRGKSTLAGM), and Arg-320 contribute to the ATP site. The 178-residue stretch at 357 to 534 (QQQWIQQPEL…SGCYTAMAIF (178 aa)) folds into the N-acetyltransferase domain. Residues 462-464 (VAV) and Glu-502 contribute to the acetyl-CoA site.

It belongs to the RNA cytidine acetyltransferase family. TmcA subfamily.

The protein localises to the cytoplasm. The catalysed reaction is cytidine(34) in elongator tRNA(Met) + acetyl-CoA + ATP + H2O = N(4)-acetylcytidine(34) in elongator tRNA(Met) + ADP + phosphate + CoA + H(+). Catalyzes the formation of N(4)-acetylcytidine (ac(4)C) at the wobble position of tRNA(Met), by using acetyl-CoA as an acetyl donor and ATP (or GTP). The polypeptide is tRNA(Met) cytidine acetyltransferase TmcA (Photorhabdus asymbiotica subsp. asymbiotica (strain ATCC 43949 / 3105-77) (Xenorhabdus luminescens (strain 2))).